The following is a 333-amino-acid chain: Elongation factor Ts, mitochondrial (333 aa).

The transit peptide at 1–17 (MLRTLRPTLPSRCLRLY) directs the protein to the mitochondrion.

The protein belongs to the EF-Ts family.

The protein resides in the mitochondrion. Its function is as follows. Associates with the EF-Tu.GDP complex and induces the exchange of GDP to GTP. It remains bound to the aminoacyl-tRNA.EF-Tu.GTP complex up to the GTP hydrolysis stage on the ribosome. This is Elongation factor Ts, mitochondrial from Coprinopsis cinerea (strain Okayama-7 / 130 / ATCC MYA-4618 / FGSC 9003) (Inky cap fungus).